A 589-amino-acid chain; its full sequence is Pyruvate kinase (589 aa).

R32 contributes to the substrate binding site. K(+) contacts are provided by N34, S36, D66, and T67. ATP is bound at residue 34-37; the sequence is NFSH. 2 residues coordinate ATP: R73 and K157. E223 is a Mg(2+) binding site. Positions 246, 247, and 279 each coordinate substrate. Residue D247 coordinates Mg(2+).

This sequence belongs to the pyruvate kinase family. It in the C-terminal section; belongs to the PEP-utilizing enzyme family. In terms of assembly, homotetramer. Requires Mg(2+) as cofactor. The cofactor is K(+).

The catalysed reaction is pyruvate + ATP = phosphoenolpyruvate + ADP + H(+). The protein operates within carbohydrate degradation; glycolysis; pyruvate from D-glyceraldehyde 3-phosphate: step 5/5. Its activity is regulated as follows. Strongly activated by glucose-6-phosphate, ribose-5-phosphate and fructose-6-phosphate. Weak activator AMP and weak inhibitor fructose-1,6-bisphosphate can act as strong inhibitors in the presence of strong activators. This chain is Pyruvate kinase (pyk), found in Lactobacillus delbrueckii subsp. bulgaricus.